Consider the following 102-residue polypeptide: Small ribosomal subunit protein uS10 (102 aa).

Belongs to the universal ribosomal protein uS10 family. Part of the 30S ribosomal subunit.

Functionally, involved in the binding of tRNA to the ribosomes. The chain is Small ribosomal subunit protein uS10 from Rhodospirillum rubrum (strain ATCC 11170 / ATH 1.1.1 / DSM 467 / LMG 4362 / NCIMB 8255 / S1).